We begin with the raw amino-acid sequence, 284 residues long: tRNA pseudouridine synthase B (284 aa).

Residue D40 is the Nucleophile of the active site.

The protein belongs to the pseudouridine synthase TruB family. Type 1 subfamily.

The enzyme catalyses uridine(55) in tRNA = pseudouridine(55) in tRNA. Functionally, responsible for synthesis of pseudouridine from uracil-55 in the psi GC loop of transfer RNAs. The sequence is that of tRNA pseudouridine synthase B from Helicobacter hepaticus (strain ATCC 51449 / 3B1).